A 638-amino-acid chain; its full sequence is DNA repair protein rhp41 (638 aa).

It belongs to the XPC family.

Its subcellular location is the nucleus. Functionally, has a role in the nucleotide excision repair (NER) pathway. Acts in both transcription-coupled repair (TCR) which removes damage from the transcribed strand of active genes and in global genome repair (GGR) which removes damage in untranscribed DNA. Involved in the repair of UV-induced damages where it is involved in the removal of cyclobutane pyrimidine dimers (CPDs). The chain is DNA repair protein rhp41 (rhp41) from Schizosaccharomyces pombe (strain 972 / ATCC 24843) (Fission yeast).